We begin with the raw amino-acid sequence, 364 residues long: Dihydroorotate dehydrogenase (quinone) (364 aa).

Residues 61 to 65 (AGFDK) and Thr-85 each bind FMN. Lys-65 provides a ligand contact to substrate. Position 110-114 (110-114 (NRMGF)) interacts with substrate. Residues Asn-139 and Asn-170 each coordinate FMN. A substrate-binding site is contributed by Asn-170. Ser-173 (nucleophile) is an active-site residue. Asn-175 provides a ligand contact to substrate. FMN-binding residues include Lys-214 and Ala-242. 243–244 (NT) lines the substrate pocket. FMN contacts are provided by residues Gly-266, Gly-295, and 316–317 (YS).

Belongs to the dihydroorotate dehydrogenase family. Type 2 subfamily. As to quaternary structure, monomer. FMN is required as a cofactor.

The protein localises to the cell membrane. It carries out the reaction (S)-dihydroorotate + a quinone = orotate + a quinol. It participates in pyrimidine metabolism; UMP biosynthesis via de novo pathway; orotate from (S)-dihydroorotate (quinone route): step 1/1. In terms of biological role, catalyzes the conversion of dihydroorotate to orotate with quinone as electron acceptor. The protein is Dihydroorotate dehydrogenase (quinone) of Rhodopseudomonas palustris (strain BisB5).